Here is a 218-residue protein sequence, read N- to C-terminus: Antifreeze protein Maxi (218 aa).

The N-terminal stretch at 1-23 is a signal peptide; sequence MALSLFTVGQFIFLFWTISITEA.

This sequence belongs to the type-I AFP family. In terms of assembly, homodimer. In terms of tissue distribution, detected in blood serum (at protein level). Detected in liver.

It localises to the secreted. Its function is as follows. Contributes to protect fish blood from freezing at subzero sea water temperatures. Lowers the blood freezing point by about 1.1 degrees at a concentration of 0.1 mg/ml, and by about 1.5 degrees at a concentration of 0.2 mg/ml. Binds to nascent ice crystals and prevents further growth. This Pseudopleuronectes americanus (Winter flounder) protein is Antifreeze protein Maxi.